A 301-amino-acid chain; its full sequence is GTPase Era (301 aa).

The 170-residue stretch at 4-173 folds into the Era-type G domain; sequence KAGFVALIGK…LECISKHLNP (170 aa). Residues 12 to 19 form a G1 region; the sequence is GKPNAGKS. 12–19 lines the GTP pocket; that stretch reads GKPNAGKS. Residues 38–42 form a G2 region; sequence NATRK. The G3 stretch occupies residues 64–67; the sequence is DTPG. GTP is bound by residues 64 to 68 and 122 to 125; these read DTPGL and SKID. The interval 122–125 is G4; that stretch reads SKID. The interval 152 to 154 is G5; it reads LSA. Residues 204–280 enclose the KH type-2 domain; sequence LSDEIPYESD…FLNLQVIAQK (77 aa).

Belongs to the TRAFAC class TrmE-Era-EngA-EngB-Septin-like GTPase superfamily. Era GTPase family. As to quaternary structure, monomer.

The protein resides in the cytoplasm. The protein localises to the cell inner membrane. An essential GTPase that binds both GDP and GTP, with rapid nucleotide exchange. Plays a role in 16S rRNA processing and 30S ribosomal subunit biogenesis and possibly also in cell cycle regulation and energy metabolism. The polypeptide is GTPase Era (Helicobacter pylori (strain P12)).